Reading from the N-terminus, the 166-residue chain is uncharacterized protein (166 aa).

The tract at residues Ser-28–Lys-55 is disordered. A compositionally biased stretch (basic and acidic residues) spans Lys-42 to Lys-55. One can recognise an HTH araC/xylS-type domain in the interval Gln-67 to Thr-163. DNA-binding regions (H-T-H motif) lie at residues Asp-84–Thr-105 and Val-130–Thr-153.

This is an uncharacterized protein from Pseudoalteromonas carrageenovora (Alteromonas carrageenovora).